A 490-amino-acid polypeptide reads, in one-letter code: Betaine aldehyde dehydrogenase (490 aa).

K(+) contacts are provided by Ser-26, Ile-27, and Asp-93. Residue 150-152 (GAW) participates in NAD(+) binding. Residue Lys-162 is the Charge relay system of the active site. Residues 176-179 (KPSE) and 230-233 (GVET) each bind NAD(+). Leu-246 lines the K(+) pocket. The active-site Proton acceptor is the Glu-252. Residues Gly-254, Cys-286, and Glu-387 each contribute to the NAD(+) site. The active-site Nucleophile is the Cys-286. The residue at position 286 (Cys-286) is a Cysteine sulfenic acid (-SOH). Positions 457 and 460 each coordinate K(+). The Charge relay system role is filled by Glu-464.

This sequence belongs to the aldehyde dehydrogenase family. Dimer of dimers. K(+) serves as cofactor.

The catalysed reaction is betaine aldehyde + NAD(+) + H2O = glycine betaine + NADH + 2 H(+). Its pathway is amine and polyamine biosynthesis; betaine biosynthesis via choline pathway; betaine from betaine aldehyde: step 1/1. Its function is as follows. Involved in the biosynthesis of the osmoprotectant glycine betaine. Catalyzes the irreversible oxidation of betaine aldehyde to the corresponding acid. This chain is Betaine aldehyde dehydrogenase, found in Acinetobacter baumannii (strain ACICU).